The chain runs to 93 residues: Stage III sporulation protein D (93 aa).

In terms of domain architecture, HTH deoR-type spans 4–75 (YIKERTIKIG…IRHLRGGEAT (72 aa)). Positions 21 to 40 (KTVRVIAKEFGVSKSTVHKD) form a DNA-binding region, H-T-H motif.

Its function is as follows. This protein regulates the transcription of sigK, which encodes mother cell chamber RNA polymerase sigma-factor (sigma K). The sequence is that of Stage III sporulation protein D (spoIIID) from Bacillus subtilis (strain 168).